Reading from the N-terminus, the 134-residue chain is Small ribosomal subunit protein bS16 (134 aa).

The interval 105–134 is disordered; that stretch reads EAERRQKRLTAKTRRRQAKKAAEAAGSAEG. The segment covering 109 to 123 has biased composition (basic residues); that stretch reads RQKRLTAKTRRRQAK.

This sequence belongs to the bacterial ribosomal protein bS16 family.

This Chlorobaculum parvum (strain DSM 263 / NCIMB 8327) (Chlorobium vibrioforme subsp. thiosulfatophilum) protein is Small ribosomal subunit protein bS16.